The chain runs to 63 residues: Small ribosomal subunit protein eS17 (63 aa).

Belongs to the eukaryotic ribosomal protein eS17 family.

The chain is Small ribosomal subunit protein eS17 from Methanococcus maripaludis (strain C7 / ATCC BAA-1331).